A 359-amino-acid polypeptide reads, in one-letter code: tRNA-specific 2-thiouridylase MnmA (359 aa).

Residues 6–13 (AMSGGVDS) and Leu-32 each bind ATP. Cys-101 (nucleophile) is an active-site residue. Cys-101 and Cys-193 are oxidised to a cystine. Gly-125 is an ATP binding site. Residues 143-145 (KDQ) are interaction with tRNA. Catalysis depends on Cys-193, which acts as the Cysteine persulfide intermediate.

Belongs to the MnmA/TRMU family.

Its subcellular location is the cytoplasm. It carries out the reaction S-sulfanyl-L-cysteinyl-[protein] + uridine(34) in tRNA + AH2 + ATP = 2-thiouridine(34) in tRNA + L-cysteinyl-[protein] + A + AMP + diphosphate + H(+). Its function is as follows. Catalyzes the 2-thiolation of uridine at the wobble position (U34) of tRNA, leading to the formation of s(2)U34. This Mycobacterium sp. (strain JLS) protein is tRNA-specific 2-thiouridylase MnmA.